The following is a 406-amino-acid chain: Putative cyclin-F3-2 (406 aa).

The interval 1-107 (MARPRTRSVA…PGAAGGPWQL (107 aa)) is disordered. Composition is skewed to low complexity over residues 11-21 (RMEATAAAAAA) and 29-57 (NPDGAEGAAVVAVAPEAAAEGPNEPNAGE).

Belongs to the cyclin family. Cyclin F subfamily.

The sequence is that of Putative cyclin-F3-2 (CYCF3-2) from Oryza sativa subsp. japonica (Rice).